The primary structure comprises 667 residues: mRNA cap guanine-N(7) methyltransferase (667 aa).

Basic and acidic residues predominate over residues 1 to 19 (MYDPARDSWEERDGDEARS). Residues 1-272 (MYDPARDSWE…RRRQEERERA (272 aa)) are disordered. Residues 33–52 (FSSSEQIYGASGENNNTTDL) show a composition bias toward polar residues. Positions 72–87 (SPPAQSTTQTPPSIST) are enriched in low complexity. Positions 88–128 (HVQSPVNPAAQEASNTQSLTSAAQNQSNKSTTTMDNTSGSA) are enriched in polar residues. A compositionally biased stretch (basic and acidic residues) spans 132–142 (PRADPSDKSNR). The span at 147 to 156 (ASPTDQNGSQ) shows a compositional bias: polar residues. A compositionally biased stretch (basic and acidic residues) spans 256–272 (LVDRETLRRRQEERERA). The mRNA cap 0 methyltransferase domain maps to 309–667 (SKIKGLRSFN…FYHAFCFYKV (359 aa)). Position 318–319 (318–319 (NN)) interacts with mRNA. S-adenosyl-L-methionine contacts are provided by residues lysine 322, glycine 365, aspartate 389, aspartate 427, 470 to 472 (MFT), and tyrosine 475. Positions 521 to 535 (KKERQSQAKKEKTDE) are enriched in basic and acidic residues. The segment at 521–547 (KKERQSQAKKEKTDEAPEDGEVEEDDG) is disordered. Positions 536-547 (APEDGEVEEDDG) are enriched in acidic residues.

The protein belongs to the class I-like SAM-binding methyltransferase superfamily. mRNA cap 0 methyltransferase family.

Its subcellular location is the nucleus. It catalyses the reaction a 5'-end (5'-triphosphoguanosine)-ribonucleoside in mRNA + S-adenosyl-L-methionine = a 5'-end (N(7)-methyl 5'-triphosphoguanosine)-ribonucleoside in mRNA + S-adenosyl-L-homocysteine. In terms of biological role, responsible for methylating the 5'-cap structure of mRNAs. The chain is mRNA cap guanine-N(7) methyltransferase (abd1) from Neosartorya fischeri (strain ATCC 1020 / DSM 3700 / CBS 544.65 / FGSC A1164 / JCM 1740 / NRRL 181 / WB 181) (Aspergillus fischerianus).